The primary structure comprises 1244 residues: Structural polyprotein (1244 aa).

The segment at 1–113 is disordered; the sequence is MNSVFYNPFG…GKRQRTALKF (113 aa). Over residues 35 to 44 the composition is skewed to polar residues; that stretch reads GLTTQIQQLT. Residues 35–69 form a host transcription inhibition region; that stretch reads GLTTQIQQLTRAVRALVLDNATRRQRPAPRTRPRK. Residues 57–81 are compositionally biased toward basic residues; that stretch reads RRQRPAPRTRPRKPKTQKPKPKKQN. Residues 62-103 carry the Nuclear localization signal motif; sequence APRTRPRKPKTQKPKPKKQNQKPPQQQKKGKNQPQQPKKPKP. A compositionally biased stretch (low complexity) spans 82 to 97; the sequence is QKPPQQQKKGKNQPQQ. The binding to the viral RNA stretch occupies residues 85–118; the sequence is PQQQKKGKNQPQQPKKPKPGKRQRTALKFEADRT. Basic residues predominate over residues 99 to 109; the sequence is KKPKPGKRQRT. The ribosome-binding stretch occupies residues 103–117; it reads PGKRQRTALKFEADR. Positions 117–267 constitute a Peptidase S3 domain; it reads RTFVGKNEDG…KTTHEDTVEW (151 aa). The active-site Charge relay system is His-144. A Nuclear export signal motif is present at residues 149–159; it reads IDHPALAKLKF. The tract at residues 160 to 165 is interaction with spike glycoprotein E2; the sequence is TKSSSY. Asp-166 serves as the catalytic Charge relay system. Positions 188–198 are dimerization of the capsid protein; the sequence is PEVFYNWHHGA. Ser-218 acts as the Charge relay system in catalysis. Residues 224–228 form a dimerization of the capsid protein region; the sequence is DNSGK. The tract at residues 252 to 256 is interaction with spike glycoprotein E2; sequence KKGAA. The interval 268 to 280 is functions as an uncleaved signal peptide for the precursor of protein E3/E2; it reads SRAITAMCILQNV. Over 268-696 the chain is Extracellular; sequence SRAITAMCIL…HYYHLYPFYT (429 aa). N-linked (GlcNAc...) asparagine; by host glycosylation is present at Asn-279. Disulfide bonds link Cys-284–Cys-290, Cys-481–Cys-595, Cys-530–Cys-555, and Cys-532–Cys-549. N-linked (GlcNAc...) asparagine; by host glycosylation occurs at Asn-525. Residue Asn-647 is glycosylated (N-linked (GlcNAc...) asparagine; by host). Residues 697-717 form a helical membrane-spanning segment; sequence VTVLSGMGLAICAGLVISILC. Residues 718–751 are Cytoplasmic-facing; it reads CCKARRDCLTPYQLAPNATVPFLVTLCCCFQRTS. The interaction with the capsid protein stretch occupies residues 720 to 724; it reads KARRD. 3 S-palmitoyl cysteine; by host lipidation sites follow: Cys-725, Cys-745, and Cys-746. Cys-725 and Cys-746 are oxidised to a cystine. At 752–764 the chain is on the extracellular side; sequence ADEFTDTMGYLWQ. Transmembrane regions (helical) follow at residues 765–785 and 786–805; these read HSQTMFWIQLVIPLAAVITLV and RCCSCCLPFLLVASPPNKAD. Topologically, residues 806–1218 are extracellular; sequence AYEHTITVPN…KTSWNWITAL (413 aa). 4 disulfides stabilise this stretch: Cys-855/Cys-920, Cys-868/Cys-900, Cys-869/Cys-902, and Cys-874/Cys-884. An E1 fusion peptide loop region spans residues 890 to 907; the sequence is VYPFLWGGAQCFCDSENS. Residues Asn-945 and Asn-1051 are each glycosylated (N-linked (GlcNAc...) asparagine; by host). Cystine bridges form between Cys-1065-Cys-1077, Cys-1106-Cys-1181, Cys-1111-Cys-1185, and Cys-1133-Cys-1175. The helical transmembrane segment at 1219-1239 threads the bilayer; sequence MGGISSIAAIAAIVLVIALVF. The Cytoplasmic portion of the chain corresponds to 1240–1244; sequence TAQHR.

In terms of assembly, homodimer. Homomultimer. Interacts with host karyopherin KPNA4; this interaction allows the nuclear import of the viral capsid protein. Interacts with spike glycoprotein E2. Interacts with host IRAK1; the interaction leads to inhibition of IRAK1-dependent signaling. As to quaternary structure, the precursor of protein E3/E2 and E1 form a heterodimer shortly after synthesis. The precursor of protein E3/E2 and E1 form a heterodimer shortly after synthesis. Processing of the precursor of protein E3/E2 into E2 and E3 results in a heterodimer of the spike glycoproteins E2 and E1. Spike at virion surface are constituted of a trimer of E2-E1 heterodimers. After target cell attachment and endocytosis, E1 change conformation to form homotrimers. Interacts with 6K protein. In terms of assembly, interacts with spike glycoprotein E1. Processing of the precursor of protein E3/E2 into E2 and E3 results in a heterodimer of the spike glycoproteins E2 and E1. Spike at virion surface are constituted of a trimer of E2-E1 heterodimers. Interacts with 6K protein. As to quaternary structure, oligomer. Interacts with spike glycoprotein E1. Interacts with spike glycoprotein E2. Post-translationally, structural polyprotein: Specific enzymatic cleavages in vivo yield mature proteins. Capsid protein is auto-cleaved during polyprotein translation, unmasking a signal peptide at the N-terminus of the precursor of E3/E2. The remaining polyprotein is then targeted to the host endoplasmic reticulum, where host signal peptidase cleaves it into pE2, 6K and E1 proteins. pE2 is further processed to mature E3 and E2 by host furin in trans-Golgi vesicle. In terms of processing, palmitoylated via thioester bonds. These palmitoylations may induce disruption of the C-terminus transmembrane. This would result in the reorientation of E2 C-terminus from lumenal to cytoplasmic side. N-glycosylated. Post-translationally, palmitoylated via thioester bonds.

The protein localises to the virion. It localises to the host cytoplasm. Its subcellular location is the host cell membrane. It is found in the host nucleus. The protein resides in the virion membrane. The protein localises to the host Golgi apparatus. It localises to the host trans-Golgi network. Its subcellular location is the host endoplasmic reticulum. It catalyses the reaction Autocatalytic release of the core protein from the N-terminus of the togavirus structural polyprotein by hydrolysis of a -Trp-|-Ser- bond.. Forms an icosahedral capsid with a T=4 symmetry composed of 240 copies of the capsid protein surrounded by a lipid membrane through which penetrate 80 spikes composed of trimers of E1-E2 heterodimers. The capsid protein binds to the viral RNA genome at a site adjacent to a ribosome binding site for viral genome translation following genome release. Possesses a protease activity that results in its autocatalytic cleavage from the nascent structural protein. Following its self-cleavage, the capsid protein transiently associates with ribosomes, and within several minutes the protein binds to viral RNA and rapidly assembles into icosahedric core particles. The resulting nucleocapsid eventually associates with the cytoplasmic domain of the spike glycoprotein E2 at the cell membrane, leading to budding and formation of mature virions. In case of infection, new virions attach to target cells and after clathrin-mediated endocytosis their membrane fuses with the host endosomal membrane. This leads to the release of the nucleocapsid into the cytoplasm, followed by an uncoating event necessary for the genomic RNA to become accessible. The uncoating might be triggered by the interaction of capsid proteins with ribosomes. Binding of ribosomes would release the genomic RNA since the same region is genomic RNA-binding and ribosome-binding. Specifically inhibits interleukin-1 receptor-associated kinase 1/IRAK1-dependent signaling during viral entry, representing a means by which the alphaviruses may evade innate immune detection and activation prior to viral gene expression. Functionally, provides the signal sequence for the translocation of the precursor of protein E3/E2 to the host endoplasmic reticulum. Furin-cleaved E3 remains associated with spike glycoprotein E1 and mediates pH protection of the latter during the transport via the secretory pathway. After virion release from the host cell, the assembly protein E3 is gradually released in the extracellular space. Its function is as follows. Plays a role in viral attachment to target host cell, by binding to the cell receptor. Synthesized as a p62 precursor which is processed by furin at the cell membrane just before virion budding, giving rise to E2-E1 heterodimer. The p62-E1 heterodimer is stable, whereas E2-E1 is unstable and dissociate at low pH. p62 is processed at the last step, presumably to avoid E1 fusion activation before its final export to cell surface. E2 C-terminus contains a transitory transmembrane that would be disrupted by palmitoylation, resulting in reorientation of the C-terminal tail from lumenal to cytoplasmic side. This step is critical since E2 C-terminus is involved in budding by interacting with capsid proteins. This release of E2 C-terminus in cytoplasm occurs lately in protein export, and precludes premature assembly of particles at the endoplasmic reticulum membrane. In terms of biological role, acts as a viroporin that participates in virus glycoprotein processing and transport to the plasma membrane, cell permeabilization and budding of viral particles. Disrupts the calcium homeostasis of the cell, probably at the endoplasmic reticulum level. This leads to cytoplasmic calcium elevation. Because of its lipophilic properties, the 6K protein is postulated to influence the selection of lipids that interact with the transmembrane domains of the glycoproteins, which, in turn, affects the deformability of the bilayer required for the extreme curvature that occurs as budding proceeds. Present in low amount in virions, about 3% compared to viral glycoproteins. Class II viral fusion protein. Fusion activity is inactive as long as E1 is bound to E2 in mature virion. After virus attachment to target cell and endocytosis, acidification of the endosome induce dissociation of E1/E2 heterodimer and concomitant trimerization of the E1 subunits. This E1 trimer is fusion active, and promotes release of viral nucleocapsid in cytoplasm after endosome and viral membrane fusion. Efficient fusion requires the presence of cholesterol and sphingolipid in the target membrane. The polypeptide is Structural polyprotein (Aedes (AURAV)).